A 491-amino-acid chain; its full sequence is Acetyl-coenzyme A carboxylase carboxyl transferase subunit beta (491 aa).

The CoA carboxyltransferase N-terminal domain maps to 132-491 (LWNQCENCFI…ISELLNLHAL (360 aa)). Positions 136, 139, 155, and 158 each coordinate Zn(2+). Residues 136-158 (CENCFIPNYKKVLKSNMQICEEC) form a C4-type zinc finger. Over residues 252-262 (EKVEEWTKPDL) the composition is skewed to basic and acidic residues. Disordered regions lie at residues 252–273 (EKVE…DEER) and 279–298 (DKGE…EDDD). Residues 284–298 (SQEIEDSEANDEDDD) show a composition bias toward acidic residues.

It belongs to the AccD/PCCB family. As to quaternary structure, acetyl-CoA carboxylase is a heterohexamer composed of biotin carboxyl carrier protein, biotin carboxylase and 2 subunits each of ACCase subunit alpha and ACCase plastid-coded subunit beta (accD). Zn(2+) serves as cofactor.

It is found in the plastid. It catalyses the reaction N(6)-carboxybiotinyl-L-lysyl-[protein] + acetyl-CoA = N(6)-biotinyl-L-lysyl-[protein] + malonyl-CoA. Its pathway is lipid metabolism; malonyl-CoA biosynthesis; malonyl-CoA from acetyl-CoA: step 1/1. Component of the acetyl coenzyme A carboxylase (ACC) complex. Biotin carboxylase (BC) catalyzes the carboxylation of biotin on its carrier protein (BCCP) and then the CO(2) group is transferred by the transcarboxylase to acetyl-CoA to form malonyl-CoA. In Cuscuta gronovii (Common dodder), this protein is Acetyl-coenzyme A carboxylase carboxyl transferase subunit beta.